A 542-amino-acid chain; its full sequence is Organic anion transporter 3 (542 aa).

The Cytoplasmic portion of the chain corresponds to 1-9 (MTFSEILDR). A Phosphoserine modification is found at serine 4. The helical transmembrane segment at 10-30 (VGSMGPFQFLHVALLGFPILG) threads the bilayer. Residues 31-123 (MANHNLLQIF…LVCSSNKLKE (93 aa)) lie on the Extracellular side of the membrane. Asparagine 86 carries N-linked (GlcNAc...) asparagine glycosylation. The helical transmembrane segment at 124–144 (MAQSIFMAGILIGGLVLGDLS) threads the bilayer. Over 145–150 (DRFGRK) the chain is Cytoplasmic. Residues 151–171 (PILTCCYLLLAASGSSTAFSP) form a helical membrane-spanning segment. Over 172–176 (TLPIY) the chain is Extracellular. The chain crosses the membrane as a helical span at residues 177 to 197 (MVFRFLCGFSISGISLSTVIL). The Cytoplasmic segment spans residues 198–212 (NVEWVPTKMRAITST). A helical transmembrane segment spans residues 213 to 233 (AIGYCYTIGQFILPGLAYAIP). Residues 234–236 (QWR) are Extracellular-facing. The helical transmembrane segment at 237–257 (WLQLTVSVPYFIFSLLSWWIP) threads the bilayer. Over 258–327 (ESIRWLVLAG…FRTPILRRVT (70 aa)) the chain is Cytoplasmic. Residues 328–348 (LCLSLAWFATGFAYYSLAMGV) form a helical membrane-spanning segment. Topologically, residues 349–354 (EEFGVN) are extracellular. The chain crosses the membrane as a helical span at residues 355–375 (IYILQIIFGGVDIPAKFITIL). Over 376 to 389 (SLSYLGRHITQGAA) the chain is Cytoplasmic. Residues 390 to 410 (LILAGAAILSLIFVPMDMSLL) traverse the membrane as a helical segment. A topological domain (extracellular) is located at residue arginine 411. A helical membrane pass occupies residues 412–432 (TILAVFGKGCLSGSFSCLFLY). Topologically, residues 433–471 (TSELFPTVIRQTGMGISNVWARVGSMISPLVKITGEIQP) are cytoplasmic. A helical membrane pass occupies residues 472–492 (FIPNIIYGTVALLGGSAALFL). Topologically, residues 493–542 (PETLNQPLPETLEDMENWFLQSKKLKQEPEAEKASQRIPLQPSGPGVDRS) are extracellular. Basic and acidic residues predominate over residues 518 to 527 (KQEPEAEKAS). The tract at residues 518 to 542 (KQEPEAEKASQRIPLQPSGPGVDRS) is disordered.

The protein belongs to the major facilitator (TC 2.A.1) superfamily. Organic cation transporter (TC 2.A.1.19) family.

It localises to the basolateral cell membrane. The catalysed reaction is estrone 3-sulfate(out) + glutarate(in) = estrone 3-sulfate(in) + glutarate(out). The enzyme catalyses estrone 3-sulfate(in) + 2-oxoglutarate(out) = estrone 3-sulfate(out) + 2-oxoglutarate(in). It catalyses the reaction glutarate(in) + 2-oxoglutarate(out) = glutarate(out) + 2-oxoglutarate(in). It carries out the reaction urate(in) + 2-oxoglutarate(out) = urate(out) + 2-oxoglutarate(in). The catalysed reaction is taurocholate(out) + glutarate(in) = taurocholate(in) + glutarate(out). The enzyme catalyses dehydroepiandrosterone 3-sulfate(out) + glutarate(in) = dehydroepiandrosterone 3-sulfate(in) + glutarate(out). It catalyses the reaction prostaglandin F2alpha(out) + glutarate(in) = prostaglandin F2alpha(in) + glutarate(out). It carries out the reaction prostaglandin F2alpha(out) + 2-oxoglutarate(in) = prostaglandin F2alpha(in) + 2-oxoglutarate(out). The catalysed reaction is (R)-carnitine(out) + 2-oxoglutarate(in) = (R)-carnitine(in) + 2-oxoglutarate(out). The enzyme catalyses glutarate(in) + (R)-carnitine(out) = glutarate(out) + (R)-carnitine(in). It catalyses the reaction prostaglandin E2(out) + 2-oxoglutarate(in) = prostaglandin E2(in) + 2-oxoglutarate(out). It carries out the reaction prostaglandin E2(out) + glutarate(in) = prostaglandin E2(in) + glutarate(out). The catalysed reaction is urate(in) + glutarate(out) = urate(out) + glutarate(in). The enzyme catalyses taurocholate(out) + 2-oxoglutarate(in) = taurocholate(in) + 2-oxoglutarate(out). It catalyses the reaction dehydroepiandrosterone 3-sulfate(out) + 2-oxoglutarate(in) = dehydroepiandrosterone 3-sulfate(in) + 2-oxoglutarate(out). It carries out the reaction kynurenate(out) + a dicarboxylate(in) = kynurenate(in) + a dicarboxylate(out). The catalysed reaction is (indol-3-yl)acetate(out) + a dicarboxylate(in) = (indol-3-yl)acetate(in) + a dicarboxylate(out). The enzyme catalyses indoxyl sulfate(out) + a dicarboxylate(in) = indoxyl sulfate(in) + a dicarboxylate(out). It catalyses the reaction N-benzoylglycine(out) + a dicarboxylate(in) = N-benzoylglycine(in) + a dicarboxylate(out). It carries out the reaction 3-carboxy-4-methyl-5-propyl-2-furanpropanoate(out) + a dicarboxylate(in) = 3-carboxy-4-methyl-5-propyl-2-furanpropanoate(in) + a dicarboxylate(out). The catalysed reaction is (6R)-L-erythro-5,6,7,8-tetrahydrobiopterin(out) + a dicarboxylate(in) = (6R)-L-erythro-5,6,7,8-tetrahydrobiopterin(in) + a dicarboxylate(out). The enzyme catalyses L-erythro-7,8-dihydrobiopterin(out) + a dicarboxylate(in) = L-erythro-7,8-dihydrobiopterin(in) + a dicarboxylate(out). It catalyses the reaction L-sepiapterin(out) + a dicarboxylate(in) = L-sepiapterin(in) + a dicarboxylate(out). Its function is as follows. Functions as an organic anion/dicarboxylate exchanger that couples organic anion uptake indirectly to the sodium gradient. Transports organic anions such as estrone 3-sulfate (E1S) and urate in exchange for dicarboxylates such as glutarate or ketoglutarate (2-oxoglutarate). Plays an important role in the excretion of endogenous and exogenous organic anions, especially from the kidney and the brain. E1S transport is pH- and chloride-dependent and may also involve E1S/cGMP exchange. Responsible for the transport of prostaglandin E2 (PGE2) and prostaglandin F2(alpha) (PGF2(alpha)) in the basolateral side of the renal tubule. Involved in the transport of neuroactive tryptophan metabolites kynurenate and xanthurenate. Functions as a biopterin transporters involved in the uptake and the secretion of coenzymes tetrahydrobiopterin (BH4), dihydrobiopterin (BH2) and sepiapterin to urine, thereby determining baseline levels of blood biopterins. May be involved in the basolateral transport of steviol, a metabolite of the popular sugar substitute stevioside. May participate in the detoxification/ renal excretion of drugs and xenobiotics, such as the histamine H(2)-receptor antagonists fexofenadine and cimetidine, the antibiotic benzylpenicillin (PCG), the anionic herbicide 2,4-dichloro-phenoxyacetate (2,4-D), the diagnostic agent p-aminohippurate (PAH), the antiviral acyclovir (ACV), and the mycotoxin ochratoxin (OTA), by transporting these exogenous organic anions across the cell membrane in exchange for dicarboxylates such as 2-oxoglutarate. Contributes to the renal uptake of potent uremic toxins (indoxyl sulfate (IS), indole acetate (IA), hippurate/N-benzoylglycine (HA) and 3-carboxy-4-methyl-5-propyl-2-furanpropionate (CMPF)), pravastatin, PCG, E1S and dehydroepiandrosterone sulfate (DHEAS), and is partly involved in the renal uptake of temocaprilat (an angiotensin-converting enzyme (ACE) inhibitor). May contribute to the release of cortisol in the adrenals. Involved in one of the detoxification systems on the choroid plexus (CP), removes substrates such as E1S or taurocholate (TC), PCG, 2,4-D and PAH, from the cerebrospinal fluid (CSF) to the blood for eventual excretion in urine and bile. Also contributes to the uptake of several other organic compounds such as the prostanoids prostaglandin E(2) and prostaglandin F(2-alpha), L-carnitine, and the therapeutic drugs allopurinol, 6-mercaptopurine (6-MP) and 5-fluorouracil (5-FU). Mediates the transport of PAH, PCG, and the statins pravastatin and pitavastatin, from the cerebrum into the blood circulation across the blood-brain barrier (BBB). In summary, plays a role in the efflux of drugs and xenobiotics, helping reduce their undesired toxicological effects on the body. This Oryctolagus cuniculus (Rabbit) protein is Organic anion transporter 3 (SLC22A8).